A 481-amino-acid chain; its full sequence is Sphingosine kinase 2 (481 aa).

In terms of domain architecture, DAGKc spans 111–253 (GRPKRLLVFV…VDVATIAQGN (143 aa)). ATP contacts are provided by residues 121–123 (NPF) and T153. 178–181 (SGDG) is a substrate binding site. The active-site Proton donor/acceptor is the D180. ATP contacts are provided by residues E185 and 210–212 (GTG). D271 contributes to the substrate binding site. Residues R278, R284, and 441–443 (DGE) each bind ATP.

Requires Mg(2+) as cofactor. As to expression, highly expressed in flowers and siliques and at lower levels in roots, leaves and stems.

The protein localises to the vacuole membrane. The enzyme catalyses a sphingoid base + ATP = a sphingoid 1-phosphate + ADP + H(+). Activated by phosphatidic acid (PA). Binding with PA stimulates the activity by promoting the binding of substrate to the catalytic site. In terms of biological role, involved in the production of sphingolipid metabolites. Phosphorylates sphingosine and various l sphingoid long-chain base (LCB) products, such as phytosphingosine (PHS, 4-hydroxysphinganine), 4-hydroxy-8-sphingenine, 4,8-sphingadienine and D-erythro-dihydrosphingosine, but has a very few activity toward D,L-threo- dihydrosphingosine. Is required for abscisic acid (ABA) signaling that mediates stomatal closure, inhibition of seed germination and root elongation. May function upstream of PLDALPHA1 and phosphatidic acid (PA) in an amplification response to ABA that mediates stomatal closure. The polypeptide is Sphingosine kinase 2 (SPHK2) (Arabidopsis thaliana (Mouse-ear cress)).